The chain runs to 269 residues: Phosphate import ATP-binding protein PstB (269 aa).

The region spanning 14-253 is the ABC transporter domain; the sequence is LSLENVSISY…EFNSTKKIFN (240 aa). ATP is bound at residue 46–53; that stretch reads GPSGCGKS.

It belongs to the ABC transporter superfamily. Phosphate importer (TC 3.A.1.7) family. As to quaternary structure, the complex is composed of two ATP-binding proteins (PstB), two transmembrane proteins (PstC and PstA) and a solute-binding protein (PstS).

The protein resides in the cell inner membrane. It catalyses the reaction phosphate(out) + ATP + H2O = ADP + 2 phosphate(in) + H(+). In terms of biological role, part of the ABC transporter complex PstSACB involved in phosphate import. Responsible for energy coupling to the transport system. The chain is Phosphate import ATP-binding protein PstB from Prochlorococcus marinus (strain MIT 9312).